The primary structure comprises 585 residues: Glycerol-3-phosphate dehydrogenase (585 aa).

Asp37–Glu65 lines the FAD pocket.

This sequence belongs to the FAD-dependent glycerol-3-phosphate dehydrogenase family. Requires FAD as cofactor.

The protein localises to the cytoplasm. The enzyme catalyses a quinone + sn-glycerol 3-phosphate = dihydroxyacetone phosphate + a quinol. The protein is Glycerol-3-phosphate dehydrogenase (glpD) of Mycobacterium leprae (strain TN).